The sequence spans 393 residues: Iripin-3 (393 aa).

The N-terminal stretch at 1–16 is a signal peptide; that stretch reads MKVITAFLSVFVLCSA. Residues Asn104 and Asn265 are each glycosylated (N-linked (GlcNAc...) asparagine).

The protein belongs to the serpin family. In terms of assembly, interacts with human KLKB1. Interacts with human ST14. Interacts with human F2 (thrombin). In terms of tissue distribution, saliva (at protein level). Expressed in salivary gland. Expressed in ovary during blood feeding.

It is found in the secreted. Its function is as follows. Serine protease inhibitor that modulates blood feeding of ticks on vertebrate species. Moderately inhibits host plasma kallikrein (KLKB1), matriptase (ST14), trypsin, plasmin (PLG), thrombin (F2) and coagulation factor VIIa (F7). Slightly inhibits host alpha-chymotrypsin, tPA/tissue-type plasminogen activator (PLAT), uPA/urokinase-type plasminogen activator (PLAU) and coagulation factor XIIa (F12). Slightly inhibits the extrinsic pathway while not affecting the intrinsic and common pathways of host blood coagulation. Decreases synthesis and secretion of IL6 by mouse bone marrow-derived macrophages. Decreases viability of mouse B- and T-cells. Decreases proliferation of mouse CD4+ T-cells in response to stimulation. Inhibits Th1 immune responses in mouse cells. Promotes differentiation of mouse regulatory T-cells. The polypeptide is Iripin-3 (Ixodes ricinus (Common tick)).